The sequence spans 563 residues: Tripeptidyl-peptidase 1 (563 aa).

A signal peptide spans 1-19; sequence MGPRSGLLGLFALFVAGKC. The propeptide at 20-195 is removed in mature form; it reads SYSPEPDQQR…PEPQVPGTVG (176 aa). Cys-111 and Cys-122 are oxidised to a cystine. The Peptidase S53 domain occupies 199–563; it reads GVTPSVIRKR…PALLKTLMNP (365 aa). 2 N-linked (GlcNAc...) asparagine glycosylation sites follow: Asn-210 and Asn-222. Catalysis depends on charge relay system residues Glu-272 and Asp-276. N-linked (GlcNAc...) asparagine glycans are attached at residues Asn-286, Asn-313, and Asn-443. 2 disulfide bridges follow: Cys-365–Cys-526 and Cys-522–Cys-537. The active-site Charge relay system is the Ser-475. Ca(2+) contacts are provided by Asp-517 and Val-518. Residues Gly-539, Gly-541, and Asp-543 each contribute to the Ca(2+) site.

Monomer. Interacts with CLN5. Interacts with CLN3. The cofactor is Ca(2+). Post-translationally, activated by autocatalytic proteolytical processing upon acidification. N-glycosylation is required for processing and activity.

The protein localises to the lysosome. It localises to the melanosome. The catalysed reaction is Release of an N-terminal tripeptide from a polypeptide, but also has endopeptidase activity.. In terms of biological role, lysosomal serine protease with tripeptidyl-peptidase I activity. May act as a non-specific lysosomal peptidase which generates tripeptides from the breakdown products produced by lysosomal proteinases. Requires substrates with an unsubstituted N-terminus. This is Tripeptidyl-peptidase 1 (TPP1) from Bos taurus (Bovine).